The chain runs to 221 residues: Riboflavin kinase (221 aa).

The segment at 1 to 92 (MVTPEDLECL…YRLFGRQEKS (92 aa)) is H-T-H motif-like. The segment at 93–221 (LMLNGTVQSG…GDEVTIEVTL (129 aa)) is riboflavin kinase. 102-107 (GLGEGA) contributes to the CDP binding site. The Mg(2+) site is built by Thr131 and Asn133. The FMN site is built by Thr188 and Glu196. A CDP-binding site is contributed by 201–204 (EGLR).

It belongs to the archaeal riboflavin kinase family. It depends on Mg(2+) as a cofactor.

It catalyses the reaction riboflavin + CTP = CDP + FMN + H(+). Its pathway is cofactor biosynthesis; FMN biosynthesis; FMN from riboflavin (CTP route): step 1/1. Its function is as follows. Catalyzes the CTP-dependent phosphorylation of riboflavin (vitamin B2) to form flavin mononucleotide (FMN). This is Riboflavin kinase (ribK) from Methanospirillum hungatei JF-1 (strain ATCC 27890 / DSM 864 / NBRC 100397 / JF-1).